Reading from the N-terminus, the 148-residue chain is Putative nickel-responsive regulator (148 aa).

Positions 88, 99, 101, and 107 each coordinate Ni(2+).

It belongs to the transcriptional regulatory CopG/NikR family. In terms of assembly, homotetramer. The cofactor is Ni(2+).

Its function is as follows. Transcriptional regulator. The chain is Putative nickel-responsive regulator from Helicobacter pylori (strain J99 / ATCC 700824) (Campylobacter pylori J99).